A 200-amino-acid chain; its full sequence is Protein GrpE (200 aa).

Positions M1 to S11 are enriched in basic and acidic residues. Residues M1–E43 form a disordered region.

Belongs to the GrpE family. As to quaternary structure, homodimer.

It is found in the cytoplasm. Participates actively in the response to hyperosmotic and heat shock by preventing the aggregation of stress-denatured proteins, in association with DnaK and GrpE. It is the nucleotide exchange factor for DnaK and may function as a thermosensor. Unfolded proteins bind initially to DnaJ; upon interaction with the DnaJ-bound protein, DnaK hydrolyzes its bound ATP, resulting in the formation of a stable complex. GrpE releases ADP from DnaK; ATP binding to DnaK triggers the release of the substrate protein, thus completing the reaction cycle. Several rounds of ATP-dependent interactions between DnaJ, DnaK and GrpE are required for fully efficient folding. The polypeptide is Protein GrpE (Afipia carboxidovorans (strain ATCC 49405 / DSM 1227 / KCTC 32145 / OM5) (Oligotropha carboxidovorans)).